A 118-amino-acid polypeptide reads, in one-letter code: T cell receptor gamma variable 5 (118 aa).

Positions 1–17 (MRWALLVLLAFLSPASQ) are cleaved as a signal peptide. Residues 18-118 (KSSNLEGGTK…GVYYCATWDR (101 aa)) form the Ig-like domain. C41 and C113 are disulfide-bonded. N-linked (GlcNAc...) asparagine glycosylation is present at N106.

In terms of assembly, gamma-delta TR is a heterodimer composed of a gamma and delta chain; disulfide-linked. The gamma-delta TR is associated with the transmembrane signaling CD3 coreceptor proteins following the stoichiometry: a single gamma-delta TR heterodimer associates with one CD3D-CD3E heterodimer, one CD3G-CD3E heterodimer and one CD247 homodimer forming a stable octameric structure. Upon activation, gamma-delta TR complex associates with FCER1G to initiate intracellular signaling.

Its subcellular location is the cell membrane. In terms of biological role, v region of the variable domain of T cell receptor (TR) gamma chain that participates in the antigen recognition. Gamma-delta TRs recognize a variety of self and foreign non-peptide antigens frequently expressed at the epithelial boundaries between the host and external environment, including endogenous lipids presented by MH-like protein CD1D and phosphoantigens presented by butyrophilin-like molecule BTN3A1. Upon antigen recognition induces rapid, innate-like immune responses involved in pathogen clearance and tissue repair. Binding of gamma-delta TR complex to antigen triggers phosphorylation of immunoreceptor tyrosine-based activation motifs (ITAMs) in the CD3 chains by the LCK and FYN kinases, allowing the recruitment, phosphorylation, and activation of ZAP70 that facilitates phosphorylation of the scaffolding proteins LCP2 and LAT. This lead to the formation of a supramolecular signalosome that recruits the phospholipase PLCG1, resulting in calcium mobilization and ERK activation, ultimately leading to T cell expansion and differentiation into effector cells. Gamma-delta TRs are produced through somatic rearrangement of a limited repertoire of variable (V), diversity (D), and joining (J) genes. The potential diversity of gamma-delta TRs is conferred by the unique ability to rearrange (D) genes in tandem and to utilize all three reading frames. The combinatorial diversity is considerably increased by the sequence exonuclease trimming and random nucleotide (N) region additions which occur during the V-(D)-J rearrangements. In Homo sapiens (Human), this protein is T cell receptor gamma variable 5.